Here is a 520-residue protein sequence, read N- to C-terminus: Sterile alpha motif domain-containing protein 3 (520 aa).

In terms of domain architecture, SAM spans 4 to 71; sequence WSVDQVCKWL…KYKQGNQELK (68 aa). The disordered stretch occupies residues 67-104; that stretch reads NQELKPTGGPADTSTLTPAQAAPEHEQNPSPTSHGDQT. Residues 94–104 are compositionally biased toward polar residues; that stretch reads NPSPTSHGDQT.

This chain is Sterile alpha motif domain-containing protein 3 (Samd3), found in Mus musculus (Mouse).